The primary structure comprises 477 residues: Cytochrome P450 monooxygenase poxC (477 aa).

The chain crosses the membrane as a helical span at residues 24–41; it reads AWHFAVLSFVYVIARSIY. Cysteine 420 is a heme binding site.

The protein belongs to the cytochrome P450 family. It depends on heme as a cofactor.

The protein resides in the membrane. It participates in secondary metabolite biosynthesis. Its function is as follows. Cytochrome P450 monooxygenase; part of the gene cluster that mediates the biosynthesis of oxaleimides, cytotoxic compounds containing an unusual disubstituted succinimide moiety. The first step of the pathway is provided by the HR-PKS poxF that serves in a new mode of collaborative biosynthesis with the PKS-NRPS poxE, by providing the olefin containing amino acid substrate via the synthesis of an ACP-bound dec-4-enoate. The cytochrome P450 monooxygenase poxM-catalyzed oxidation at the alpha-position creates the enzyme-bound 2-hydroxydec-4-enoyl-ACP thioester, which may be prone to spontaneous hydrolysis to yield 2-hydroxydec-4-enoic acid due to increased electrophilicity of the carbonyl. 2-hydroxydec-4-enoic acid can then be further oxidized by poxM to yield the alpha-ketoacid 2-oxodec-4-enoicacid, which is reductively aminated by the aminotransferase poxL to yield (S,E)-2-aminodec-4-enoic acid. The Hybrid PKS-NRPS synthetase poxE then performs condensation between the octaketide product of its PKS modules and the amino group of (S,E)-2-aminodec-4-enoic acid which is activated and incorporated by the adenylation domain. The resulting aminoacyl product can be cyclized by the Diels-Alderase PoxQ and reductively released by the reductive (R) domain of poxE to yield an aldehyde intermediate. The released aldehyde is then substrate for a Knoevenagel condensation by the hydrolyase poxO followed by an oxidation at the 5-position of the pyrrolidone ring. The presence of the olefin from the amino acid building block allows for migration of the substituted allyl group to occur. This allylic transposition reaction takes place in a conjugate addition, semipinacol-like fashion to yield a succinimide intermediate. Iterative two-electron oxidations of the C7 methyl of the succinimide intermediate to the carboxylic acid can be catalyzed by one of two remaining cytochrome P450 monooxygenasess poxC or poxD to yield oxaleimide A. Subsequent oxidation yields the maleimide scaffold oxaleimide I. Both oxaleimide A and oxaleimide I can undergo oxidative modifications in the decalin ring to yield the series of products oxaleimides B to H. The protein is Cytochrome P450 monooxygenase poxC of Penicillium oxalicum (strain 114-2 / CGMCC 5302) (Penicillium decumbens).